The primary structure comprises 460 residues: MSHQGKIVQCIGAVIDVEFASEGIPKVYDALVMEGSELTLEVQQQLGDGVVRTIALGSSDGLRRGMMVTNTQKQISVPVGTKTLGRIMDVLGRPIDEMGEIGAESFMPIHRTAPAFDELSASTELLETGIKVIDLICPFAKGGKVGLFGGAGVGKTVNMMELIRNIAIEHSGYSVFAGVGERTREGNDFYHEMKDSNVLDKVALVYGQMNEPPGNRLRVALTGLTMAEAFRDEGRDVLFFVDNIYRYTLAGTEVSALLGRMPSAVGYQPTLAEEMGRLQERITSSKTGSITSIQAVYVPADDLTDPSPATTFGHLDATVVLSRDIASLGIYPAVDPLDSTSRQLDPLVVGEDHYNTAREVQQTLQRYKELRDIIAILGMDELSPEDKLSVSRARKIQRFLSQPFFVAEVFTGSPGKYVSLKETIKGFKGIINGEYDDIPEQAFYMVGGIEEVLEKAKSFQ.

149-156 (GGAGVGKT) serves as a coordination point for ATP.

This sequence belongs to the ATPase alpha/beta chains family. F-type ATPases have 2 components, CF(1) - the catalytic core - and CF(0) - the membrane proton channel. CF(1) has five subunits: alpha(3), beta(3), gamma(1), delta(1), epsilon(1). CF(0) has three main subunits: a(1), b(2) and c(9-12). The alpha and beta chains form an alternating ring which encloses part of the gamma chain. CF(1) is attached to CF(0) by a central stalk formed by the gamma and epsilon chains, while a peripheral stalk is formed by the delta and b chains.

It localises to the cell inner membrane. The catalysed reaction is ATP + H2O + 4 H(+)(in) = ADP + phosphate + 5 H(+)(out). Its function is as follows. Produces ATP from ADP in the presence of a proton gradient across the membrane. The catalytic sites are hosted primarily by the beta subunits. This is ATP synthase subunit beta 1 from Nitrosomonas eutropha (strain DSM 101675 / C91 / Nm57).